Reading from the N-terminus, the 840-residue chain is Translation initiation factor IF-2 (840 aa).

The interval 1–251 is disordered; the sequence is MTEEKKFSSS…GPAVPATERK (251 aa). 2 stretches are compositionally biased toward polar residues: residues 38–50 and 65–83; these read DGTNSSAGTTPRS and NRHTNSSRSNTQGGNASRP. Positions 84-102 are enriched in low complexity; it reads NQSKSQGQGGRNNQRPGSR. Composition is skewed to basic and acidic residues over residues 110–135 and 158–168; these read PMIREKKNWSTKPREGQIDYSKKTDN and KPAEQSKKAAE. The span at 169–207 shows a compositional bias: low complexity; sequence KPAQTKPKTAETKTTATTTQSGTGKFGGALASGNNSARN. The span at 230–239 shows a compositional bias: basic residues; it reads GSKKSRRIAA. The tr-type G domain occupies 341 to 510; sequence ARPPVVTIMG…LLQAEVLELK (170 aa). Positions 350–357 are G1; that stretch reads GHVDHGKT. 350-357 provides a ligand contact to GTP; sequence GHVDHGKT. The interval 375–379 is G2; sequence GITQH. A G3 region spans residues 396–399; it reads DTPG. GTP contacts are provided by residues 396 to 400 and 450 to 453; these read DTPGH and NKID. The tract at residues 450-453 is G4; it reads NKID. The interval 486–488 is G5; the sequence is SAK.

This sequence belongs to the TRAFAC class translation factor GTPase superfamily. Classic translation factor GTPase family. IF-2 subfamily.

The protein localises to the cytoplasm. In terms of biological role, one of the essential components for the initiation of protein synthesis. Protects formylmethionyl-tRNA from spontaneous hydrolysis and promotes its binding to the 30S ribosomal subunits. Also involved in the hydrolysis of GTP during the formation of the 70S ribosomal complex. In Leuconostoc citreum (strain KM20), this protein is Translation initiation factor IF-2.